Here is an 83-residue protein sequence, read N- to C-terminus: Cytochrome b559 subunit alpha (83 aa).

Residues 21-35 (IIHTITVPMLFLAGW) traverse the membrane as a helical segment. H23 contacts heme.

It belongs to the PsbE/PsbF family. Heterodimer of an alpha subunit and a beta subunit. PSII is composed of 1 copy each of membrane proteins PsbA, PsbB, PsbC, PsbD, PsbE, PsbF, PsbH, PsbI, PsbJ, PsbK, PsbL, PsbM, PsbT, PsbX, PsbY, PsbZ, Psb30/Ycf12, peripheral proteins PsbO, CyanoQ (PsbQ), PsbU, PsbV and a large number of cofactors. It forms dimeric complexes. It depends on heme b as a cofactor.

Its subcellular location is the cellular thylakoid membrane. In terms of biological role, this b-type cytochrome is tightly associated with the reaction center of photosystem II (PSII). PSII is a light-driven water:plastoquinone oxidoreductase that uses light energy to abstract electrons from H(2)O, generating O(2) and a proton gradient subsequently used for ATP formation. It consists of a core antenna complex that captures photons, and an electron transfer chain that converts photonic excitation into a charge separation. This chain is Cytochrome b559 subunit alpha, found in Acaryochloris marina (strain MBIC 11017).